An 88-amino-acid polypeptide reads, in one-letter code: Cold-regulated protein BLT14 (88 aa).

The chain is Cold-regulated protein BLT14 (BLT14) from Hordeum vulgare (Barley).